The primary structure comprises 102 residues: RNA-binding protein Hfq (102 aa).

The Sm domain occupies 9-68 (DPFLNALRRERVPVSIYLVNGIKLQGQIESFDQFVILLKNTVSQMVYKHAISTVVPSRPV). Positions 63 to 102 (VPSRPVSHHSNNAGGGTSNNYHHGSNAQGSGAQQDSEETE) are disordered. Positions 70 to 96 (HHSNNAGGGTSNNYHHGSNAQGSGAQQ) are enriched in polar residues.

Belongs to the Hfq family. In terms of assembly, homohexamer.

RNA chaperone that binds small regulatory RNA (sRNAs) and mRNAs to facilitate mRNA translational regulation in response to envelope stress, environmental stress and changes in metabolite concentrations. Also binds with high specificity to tRNAs. The sequence is that of RNA-binding protein Hfq from Salmonella arizonae (strain ATCC BAA-731 / CDC346-86 / RSK2980).